Reading from the N-terminus, the 458-residue chain is Ribulose bisphosphate carboxylase (458 aa).

Residue N111 coordinates substrate. K166 (proton acceptor) is an active-site residue. K168 is a binding site for substrate. Mg(2+) is bound by residues K191, D193, and E194. N6-carboxylysine is present on K191. H287 functions as the Proton acceptor in the catalytic mechanism. Substrate-binding residues include R288, H321, and S368.

It belongs to the RuBisCO large chain family. Type II subfamily. As to quaternary structure, homodimer. Mg(2+) serves as cofactor.

It catalyses the reaction 2 (2R)-3-phosphoglycerate + 2 H(+) = D-ribulose 1,5-bisphosphate + CO2 + H2O. The enzyme catalyses D-ribulose 1,5-bisphosphate + O2 = 2-phosphoglycolate + (2R)-3-phosphoglycerate + 2 H(+). Functionally, ruBisCO catalyzes two reactions: the carboxylation of D-ribulose 1,5-bisphosphate, the primary event in carbon dioxide fixation, as well as the oxidative fragmentation of the pentose substrate. Both reactions occur simultaneously and in competition at the same active site. In Rhodobacter capsulatus (Rhodopseudomonas capsulata), this protein is Ribulose bisphosphate carboxylase (cbbM).